A 185-amino-acid chain; its full sequence is MARDEFPGWHGTTIIGVKKGGEVVIAGDGQVSLGQTVIKGTARKVRRLSPGGFDVVAGFAGSTADAFTLLERLEAKLEATPGQLARASVELAKDWRTDKYLQKLEAMLIVSDGKDIFVITGAGDVLEPEHDVTAIGSGGNYALAAARGMMDSPRSAEEVARDAMAIAADICVYTNGNLTVETISA.

Thr-12 is an active-site residue. 3 residues coordinate Na(+): Ala-168, Cys-171, and Thr-174.

The protein belongs to the peptidase T1B family. HslV subfamily. A double ring-shaped homohexamer of HslV is capped on each side by a ring-shaped HslU homohexamer. The assembly of the HslU/HslV complex is dependent on binding of ATP.

The protein resides in the cytoplasm. The catalysed reaction is ATP-dependent cleavage of peptide bonds with broad specificity.. With respect to regulation, allosterically activated by HslU binding. Its function is as follows. Protease subunit of a proteasome-like degradation complex believed to be a general protein degrading machinery. This Roseobacter denitrificans (strain ATCC 33942 / OCh 114) (Erythrobacter sp. (strain OCh 114)) protein is ATP-dependent protease subunit HslV.